Consider the following 73-residue polypeptide: MKNIMVRDEVYEKLQKMKKGRESFSDVILRLIEGRKKRGIEILERYAGSLSDSELEKIVMEERRKFRVRSFDS.

Belongs to the UPF0330 family.

Functionally, possibly the antitoxin component of a type II toxin-antitoxin (TA) system. Its cognate toxin is VapC16 (Potential). The sequence is that of Putative antitoxin VapB16 (vapB16) from Archaeoglobus fulgidus (strain ATCC 49558 / DSM 4304 / JCM 9628 / NBRC 100126 / VC-16).